Consider the following 425-residue polypeptide: Serine--tRNA ligase (425 aa).

230 to 232 lines the L-serine pocket; the sequence is TAE. An ATP-binding site is contributed by 261-263; the sequence is RSE. E284 provides a ligand contact to L-serine. 348 to 351 lines the ATP pocket; that stretch reads EISS. S384 lines the L-serine pocket.

This sequence belongs to the class-II aminoacyl-tRNA synthetase family. Type-1 seryl-tRNA synthetase subfamily. As to quaternary structure, homodimer. The tRNA molecule binds across the dimer.

The protein localises to the cytoplasm. The enzyme catalyses tRNA(Ser) + L-serine + ATP = L-seryl-tRNA(Ser) + AMP + diphosphate + H(+). It catalyses the reaction tRNA(Sec) + L-serine + ATP = L-seryl-tRNA(Sec) + AMP + diphosphate + H(+). The protein operates within aminoacyl-tRNA biosynthesis; selenocysteinyl-tRNA(Sec) biosynthesis; L-seryl-tRNA(Sec) from L-serine and tRNA(Sec): step 1/1. Functionally, catalyzes the attachment of serine to tRNA(Ser). Is also able to aminoacylate tRNA(Sec) with serine, to form the misacylated tRNA L-seryl-tRNA(Sec), which will be further converted into selenocysteinyl-tRNA(Sec). This Streptococcus pyogenes serotype M5 (strain Manfredo) protein is Serine--tRNA ligase.